We begin with the raw amino-acid sequence, 97 residues long: Aspartyl/glutamyl-tRNA(Asn/Gln) amidotransferase subunit C (97 aa).

It belongs to the GatC family. Heterotrimer of A, B and C subunits.

The enzyme catalyses L-glutamyl-tRNA(Gln) + L-glutamine + ATP + H2O = L-glutaminyl-tRNA(Gln) + L-glutamate + ADP + phosphate + H(+). The catalysed reaction is L-aspartyl-tRNA(Asn) + L-glutamine + ATP + H2O = L-asparaginyl-tRNA(Asn) + L-glutamate + ADP + phosphate + 2 H(+). Its function is as follows. Allows the formation of correctly charged Asn-tRNA(Asn) or Gln-tRNA(Gln) through the transamidation of misacylated Asp-tRNA(Asn) or Glu-tRNA(Gln) in organisms which lack either or both of asparaginyl-tRNA or glutaminyl-tRNA synthetases. The reaction takes place in the presence of glutamine and ATP through an activated phospho-Asp-tRNA(Asn) or phospho-Glu-tRNA(Gln). The sequence is that of Aspartyl/glutamyl-tRNA(Asn/Gln) amidotransferase subunit C from Thermosynechococcus vestitus (strain NIES-2133 / IAM M-273 / BP-1).